We begin with the raw amino-acid sequence, 219 residues long: Large ribosomal subunit protein uL16 (219 aa).

This sequence belongs to the universal ribosomal protein uL16 family. In terms of assembly, component of the small ribosomal subunit. Mature ribosomes consist of a small (40S) and a large (60S) subunit. The 40S subunit contains about 33 different proteins and 1 molecule of RNA (18S). The 60S subunit contains about 49 different proteins and 3 molecules of RNA (25S, 5.8S and 5S).

This chain is Large ribosomal subunit protein uL16 (RPL10), found in Encephalitozoon cuniculi (strain GB-M1) (Microsporidian parasite).